A 319-amino-acid polypeptide reads, in one-letter code: Extracellular phospholipase A1 (319 aa).

Residues M1–A24 form the signal peptide.

It catalyses the reaction a 1,2-diacyl-sn-glycero-3-phosphocholine + H2O = a 2-acyl-sn-glycero-3-phosphocholine + a fatty acid + H(+). The sequence is that of Extracellular phospholipase A1 (phlA) from Serratia liquefaciens.